The following is a 936-amino-acid chain: 2-oxoglutarate dehydrogenase E1 component (936 aa).

It belongs to the alpha-ketoglutarate dehydrogenase family. In terms of assembly, homodimer. Part of the 2-oxoglutarate dehydrogenase (OGDH) complex composed of E1 (2-oxoglutarate dehydrogenase), E2 (dihydrolipoamide succinyltransferase) and E3 (dihydrolipoamide dehydrogenase); the complex contains multiple copies of the three enzymatic components (E1, E2 and E3). Thiamine diphosphate serves as cofactor.

It carries out the reaction N(6)-[(R)-lipoyl]-L-lysyl-[protein] + 2-oxoglutarate + H(+) = N(6)-[(R)-S(8)-succinyldihydrolipoyl]-L-lysyl-[protein] + CO2. E1 component of the 2-oxoglutarate dehydrogenase (OGDH) complex which catalyzes the decarboxylation of 2-oxoglutarate, the first step in the conversion of 2-oxoglutarate to succinyl-CoA and CO(2). The chain is 2-oxoglutarate dehydrogenase E1 component (sucA) from Rickettsia prowazekii (strain Madrid E).